We begin with the raw amino-acid sequence, 466 residues long: Phage-like element PBSX protein XkdK (466 aa).

It belongs to the myoviridae tail sheath protein family.

The polypeptide is Phage-like element PBSX protein XkdK (xkdK) (Bacillus subtilis (strain 168)).